Here is a 146-residue protein sequence, read N- to C-terminus: Urease accessory protein UreE 1 (146 aa).

The protein belongs to the UreE family.

It is found in the cytoplasm. Its function is as follows. Involved in urease metallocenter assembly. Binds nickel. Probably functions as a nickel donor during metallocenter assembly. This chain is Urease accessory protein UreE 1, found in Pseudomonas syringae pv. syringae (strain B728a).